Here is a 499-residue protein sequence, read N- to C-terminus: Laccase (499 aa).

Plastocyanin-like domains follow at residues 2-127 (VGPV…FVVY) and 139-281 (VDND…ILRY). N-linked (GlcNAc...) asparagine glycans are attached at residues asparagine 51 and asparagine 54. 4 residues coordinate Cu cation: histidine 64, histidine 66, histidine 109, and histidine 111. 2 disulfides stabilise this stretch: cysteine 85-cysteine 488 and cysteine 117-cysteine 205. Position 196 is a 3'-nitrotyrosine (tyrosine 196). N-linked (GlcNAc...) asparagine glycosylation is found at asparagine 208, asparagine 217, asparagine 292, and asparagine 333. The region spanning 348–470 (SVPVLLQILS…GGFAVVQAED (123 aa)) is the Plastocyanin-like 3 domain. Tyrosine 372 carries the 3'-nitrotyrosine modification. The N-linked (GlcNAc...) asparagine glycan is linked to asparagine 377. Residues histidine 395, histidine 398, and histidine 400 each coordinate Cu cation. N-linked (GlcNAc...) asparagine glycans are attached at residues asparagine 416 and asparagine 436. Residues histidine 452, cysteine 453, histidine 454, and histidine 458 each contribute to the Cu cation site.

Belongs to the multicopper oxidase family. It depends on Cu cation as a cofactor.

It is found in the secreted. The catalysed reaction is 4 hydroquinone + O2 = 4 benzosemiquinone + 2 H2O. Lignin degradation and detoxification of lignin-derived products. The sequence is that of Laccase from Trametes maxima (White-rot fungus).